The following is a 298-amino-acid chain: Protoheme IX farnesyltransferase (298 aa).

A run of 9 helical transmembrane segments spans residues 16 to 36 (VVALIVFTALVGMFLAIPDMP), 45 to 65 (ALGFLGIWLAASAAAAINQLL), 93 to 113 (VFAGVLIVISMTILVVWVNVI), 114 to 134 (TAVLTFASLIGYAVIYTVYLK), 141 to 161 (IVIGGLAGATPPMLGWAAVTG), 172 to 192 (SLLVLIIFIWTPPHFWALAIF), 218 to 238 (ILVYTVLLAIVTLAPVAVGMS), 241 to 261 (FYLGGAAVLNAVFLWYAWRML), and 277 to 297 (IVYLMALFAFLMVDHLLLPWV).

The protein belongs to the UbiA prenyltransferase family. Protoheme IX farnesyltransferase subfamily.

It is found in the cell inner membrane. It carries out the reaction heme b + (2E,6E)-farnesyl diphosphate + H2O = Fe(II)-heme o + diphosphate. It functions in the pathway porphyrin-containing compound metabolism; heme O biosynthesis; heme O from protoheme: step 1/1. In terms of biological role, converts heme B (protoheme IX) to heme O by substitution of the vinyl group on carbon 2 of heme B porphyrin ring with a hydroxyethyl farnesyl side group. The polypeptide is Protoheme IX farnesyltransferase (Xanthomonas axonopodis pv. citri (strain 306)).